A 93-amino-acid polypeptide reads, in one-letter code: Small ribosomal subunit protein bS20c (93 aa).

This sequence belongs to the bacterial ribosomal protein bS20 family.

The protein localises to the plastid. It localises to the chloroplast. In terms of biological role, binds directly to 16S ribosomal RNA. This Thalassiosira pseudonana (Marine diatom) protein is Small ribosomal subunit protein bS20c.